The chain runs to 215 residues: Cytochrome b6 (215 aa).

The Cytoplasmic segment spans residues 1 to 31; the sequence is MANVYDWFQERLEIQALADDVTSKYVPPHVN. The helical transmembrane segment at 32 to 52 threads the bilayer; sequence IFYCLGGITLTCFLIQFATGF. Residue cysteine 35 participates in heme c binding. Residues 53–89 lie on the Lumenal, thylakoid side of the membrane; it reads AMTFYYKPTVTEAYASVQYIMNEVSFGWLIRSIHRWS. Positions 83, 86, 100, and 103 each coordinate heme b. Residues 90–110 traverse the membrane as a helical segment; sequence ASMMVLMMILHVFRVYLTGGF. Residues 111–115 are Cytoplasmic-facing; the sequence is KKPRE. The chain crosses the membrane as a helical span at residues 116–136; that stretch reads LTWISGVILAVITVSFGVTGY. Topologically, residues 137–185 are lumenal, thylakoid; it reads SLPWDQVGYWAVKIVSGVPEAIPVVGVLISDLLRGGSSVGQATLTRYYS. The chain crosses the membrane as a helical span at residues 186–206; sequence AHTFVLPWLIAVFMLLHFLMI. Residues histidine 187 and histidine 202 each contribute to the heme b site. At 207-215 the chain is on the cytoplasmic side; the sequence is RKQGISGPL. Lysine 208 contacts heme c.

Belongs to the cytochrome b family. PetB subfamily. As to quaternary structure, the 4 large subunits of the cytochrome b6-f complex are cytochrome b6, subunit IV (17 kDa polypeptide, PetD), cytochrome f and the Rieske protein, while the 4 small subunits are PetG, PetL, PetM and PetN. The complex functions as a dimer. Heme b is required as a cofactor. Requires heme c as cofactor.

The protein resides in the cellular thylakoid membrane. In terms of biological role, component of the cytochrome b6-f complex, which mediates electron transfer between photosystem II (PSII) and photosystem I (PSI), cyclic electron flow around PSI, and state transitions. The polypeptide is Cytochrome b6 (Mastigocladus laminosus (Fischerella sp.)).